We begin with the raw amino-acid sequence, 717 residues long: Serologically defined colon cancer antigen 8 homolog (717 aa).

2 positions are modified to phosphoserine: Ser4 and Ser28. The interval 84–115 (QTNKENETSPPRRRKLSPSRPSECDDGSMPTM) is disordered. Coiled-coil stretches lie at residues 129–168 (IHHLEAEVKFCKDELSGMKNRVQVVVLENERLQQELKSQR), 221–278 (DANK…LAAS), 352–590 (EEAN…SEQY), and 622–712 (RSQI…LPSM). A sufficient for homodimerization region spans residues 216-717 (TASTGDANKW…QLPSMPQSDC (502 aa)).

As to quaternary structure, homodimer. Interacts with OFD1; the interaction is direct. Interacts with FAM161A. Interacts with RABEP2, ERC1 and CEP131. In terms of tissue distribution, expressed in liver, kidney, spleen, brain, heart and muscle. Expressed in photoreceptor cells of the retina.

Its subcellular location is the cytoplasm. It localises to the cytoskeleton. It is found in the microtubule organizing center. The protein resides in the centrosome. The protein localises to the centriole. Its subcellular location is the cilium basal body. It localises to the cell junction. Plays a role in the establishment of cell polarity and epithelial lumen formation. Also plays an essential role in ciliogenesis and subsequent Hedgehog signaling pathway that requires the presence of intact primary cilia for pathway activation. Mechanistically, interacts with and mediates RABEP2 centrosomal localization which is critical for ciliogenesis. The sequence is that of Serologically defined colon cancer antigen 8 homolog (Sdccag8) from Mus musculus (Mouse).